Here is a 184-residue protein sequence, read N- to C-terminus: Oligoribonuclease (184 aa).

One can recognise an Exonuclease domain in the interval 10–172 (LVWVDCEMTG…ADVLESIAEL (163 aa)). The active site involves Tyr129.

Belongs to the oligoribonuclease family.

Its subcellular location is the cytoplasm. In terms of biological role, 3'-to-5' exoribonuclease specific for small oligoribonucleotides. This is Oligoribonuclease from Tropheryma whipplei (strain Twist) (Whipple's bacillus).